A 142-amino-acid polypeptide reads, in one-letter code: Large ribosomal subunit protein uL23 (142 aa).

Lys61 participates in a covalent cross-link: Glycyl lysine isopeptide (Lys-Gly) (interchain with G-Cter in SUMO).

This sequence belongs to the universal ribosomal protein uL23 family. In terms of assembly, component of the large ribosomal subunit (LSU). Mature yeast ribosomes consist of a small (40S) and a large (60S) subunit. The 40S small subunit contains 1 molecule of ribosomal RNA (18S rRNA) and 33 different proteins (encoded by 57 genes). The large 60S subunit contains 3 rRNA molecules (25S, 5.8S and 5S rRNA) and 46 different proteins (encoded by 81 genes). uL23 is associated with the polypeptide exit tunnel.

The protein resides in the cytoplasm. In terms of biological role, component of the ribosome, a large ribonucleoprotein complex responsible for the synthesis of proteins in the cell. The small ribosomal subunit (SSU) binds messenger RNAs (mRNAs) and translates the encoded message by selecting cognate aminoacyl-transfer RNA (tRNA) molecules. The large subunit (LSU) contains the ribosomal catalytic site termed the peptidyl transferase center (PTC), which catalyzes the formation of peptide bonds, thereby polymerizing the amino acids delivered by tRNAs into a polypeptide chain. The nascent polypeptides leave the ribosome through a tunnel in the LSU and interact with protein factors that function in enzymatic processing, targeting, and the membrane insertion of nascent chains at the exit of the ribosomal tunnel. uL23 is a major component of the universal docking site for these factors at the polypeptide exit tunnel. The polypeptide is Large ribosomal subunit protein uL23 (Saccharomyces cerevisiae (strain ATCC 204508 / S288c) (Baker's yeast)).